A 130-amino-acid chain; its full sequence is MDKLFLEIVTPEGEIFANDVKSVQVPGCEGEFGILPRHATLVTTLNAGVIEVINLDGTKDMIAIDDGGCIKVAEDKTTILANGAVYIGGSNESEIAISLQKAKELVKSMSSNTIVYATTIAKIDEQVRQK.

Belongs to the ATPase epsilon chain family. As to quaternary structure, F-type ATPases have 2 components, CF(1) - the catalytic core - and CF(0) - the membrane proton channel. CF(1) has five subunits: alpha(3), beta(3), gamma(1), delta(1), epsilon(1). CF(0) has three main subunits: a, b and c.

The protein localises to the cell inner membrane. In terms of biological role, produces ATP from ADP in the presence of a proton gradient across the membrane. This is ATP synthase epsilon chain from Campylobacter hominis (strain ATCC BAA-381 / DSM 21671 / CCUG 45161 / LMG 19568 / NCTC 13146 / CH001A).